The chain runs to 294 residues: tRNA pseudouridine synthase B (294 aa).

The active-site Nucleophile is D39.

The protein belongs to the pseudouridine synthase TruB family. Type 1 subfamily.

It carries out the reaction uridine(55) in tRNA = pseudouridine(55) in tRNA. In terms of biological role, responsible for synthesis of pseudouridine from uracil-55 in the psi GC loop of transfer RNAs. The sequence is that of tRNA pseudouridine synthase B from Streptococcus pyogenes serotype M5 (strain Manfredo).